We begin with the raw amino-acid sequence, 442 residues long: Chromosomal replication initiator protein DnaA (442 aa).

Residues 1–75 (MDAWPRCLER…GNGEVALAVG (75 aa)) are domain I, interacts with DnaA modulators. Residues 75–104 (GSRPRAPEPAPAPVAATIAPQAAPIAPFAG) are domain II. The segment at 105-322 (NLDSHYTFAN…GALNTLVARA (218 aa)) is domain III, AAA+ region. Residues Gly150, Gly152, Lys153, and Thr154 each contribute to the ATP site. The domain IV, binds dsDNA stretch occupies residues 323–442 (NFTGRSITVE…WEKLIRKLSE (120 aa)).

It belongs to the DnaA family. As to quaternary structure, oligomerizes as a right-handed, spiral filament on DNA at oriC.

It localises to the cytoplasm. Its function is as follows. Plays an essential role in the initiation and regulation of chromosomal replication. ATP-DnaA binds to the origin of replication (oriC) to initiate formation of the DNA replication initiation complex once per cell cycle. Binds the DnaA box (a 9 base pair repeat at the origin) and separates the double-stranded (ds)DNA. Forms a right-handed helical filament on oriC DNA; dsDNA binds to the exterior of the filament while single-stranded (ss)DNA is stabiized in the filament's interior. The ATP-DnaA-oriC complex binds and stabilizes one strand of the AT-rich DNA unwinding element (DUE), permitting loading of DNA polymerase. After initiation quickly degrades to an ADP-DnaA complex that is not apt for DNA replication. Binds acidic phospholipids. This Xanthomonas oryzae pv. oryzae (strain PXO99A) protein is Chromosomal replication initiator protein DnaA.